The sequence spans 570 residues: Laccase-3 (570 aa).

Positions 1-25 (MESFRRFSLLSFIALLAYFAFLASA) are cleaved as a signal peptide. Plastocyanin-like domains lie at 33–149 (VITP…PRLG) and 159–310 (RDIP…YVNA). Residue Asn-79 is glycosylated (N-linked (GlcNAc...) asparagine). Residues His-83, His-85, His-128, and His-130 each contribute to the Cu cation site. N-linked (GlcNAc...) asparagine glycans are attached at residues Asn-188, Asn-298, Asn-332, Asn-383, Asn-393, and Asn-433. Positions 419 to 554 (DFPPVPPVQF…AMVFLVENGR (136 aa)) constitute a Plastocyanin-like 3 domain. Cu cation-binding residues include His-471, His-474, His-476, His-533, Cys-534, His-535, and His-539.

Belongs to the multicopper oxidase family. Requires Cu cation as cofactor. Mostly expressed in roots and siliques.

The protein resides in the secreted. It localises to the extracellular space. The protein localises to the apoplast. The catalysed reaction is 4 hydroquinone + O2 = 4 benzosemiquinone + 2 H2O. Lignin degradation and detoxification of lignin-derived products. In Arabidopsis thaliana (Mouse-ear cress), this protein is Laccase-3 (LAC3).